Reading from the N-terminus, the 206-residue chain is Large ribosomal subunit protein eL13 (206 aa).

Over residues 184–193 the composition is skewed to basic and acidic residues; it reads EKTNQKWDGK. The segment at 184-206 is disordered; it reads EKTNQKWDGKRKAKAQAAAEPKA.

Belongs to the eukaryotic ribosomal protein eL13 family.

The sequence is that of Large ribosomal subunit protein eL13 (RPL13) from Tetrahymena thermophila (strain SB210).